A 451-amino-acid chain; its full sequence is C4-dicarboxylate transport protein (451 aa).

The next 9 membrane-spanning stretches (helical) occupy residues 17–37 (SLYVQVLFAVVVGVLLGHFYP), 53–73 (LIKMIIAPIIFCTVVVGIAGM), 85–105 (LALLYFEIVSSVALVIGLIVV), 153–173 (AFAKGEILQVLLIAVMFGFAL), 193–213 (VLFTIVGYIMKVAPIGAFGAM), 231–251 (LMGSFYLTCLLFVFVVLGLIA), 306–326 (GYSFNLDGTSIYLTMAAVFIA), 339–359 (ITLLLVLLLTSKGAAGITGSG), and 361–381 (IVLAATLSAVGHVPVAGLALI).

Belongs to the dicarboxylate/amino acid:cation symporter (DAACS) (TC 2.A.23) family.

Its subcellular location is the cell inner membrane. Its function is as follows. Responsible for the transport of dicarboxylates such as succinate, fumarate, and malate from the periplasm across the membrane. This Paracidovorax citrulli (strain AAC00-1) (Acidovorax citrulli) protein is C4-dicarboxylate transport protein.